We begin with the raw amino-acid sequence, 512 residues long: Cytochrome P450 1A1 (512 aa).

A mitochondrial targeting signal region spans residues 29 to 40 (SRPRVPKGLKNP). An O-linked (GlcNAc) serine glycan is attached at Ser67. Residue Phe224 coordinates substrate. Cys457 provides a ligand contact to heme.

This sequence belongs to the cytochrome P450 family. Interacts with cytosolic chaperones HSP70 and HSP90; this interaction is required for initial targeting to mitochondria. Interacts (via mitochondrial targeting signal) with TOMM40 (via N-terminus); this interaction is required for translocation across the mitochondrial outer membrane. It depends on heme as a cofactor.

The protein resides in the endoplasmic reticulum membrane. The protein localises to the mitochondrion inner membrane. It localises to the microsome membrane. It is found in the cytoplasm. The catalysed reaction is an organic molecule + reduced [NADPH--hemoprotein reductase] + O2 = an alcohol + oxidized [NADPH--hemoprotein reductase] + H2O + H(+). The enzyme catalyses estrone + reduced [NADPH--hemoprotein reductase] + O2 = 2-hydroxyestrone + oxidized [NADPH--hemoprotein reductase] + H2O + H(+). It catalyses the reaction estrone + reduced [NADPH--hemoprotein reductase] + O2 = 4-hydroxyestrone + oxidized [NADPH--hemoprotein reductase] + H2O + H(+). It carries out the reaction estrone + reduced [NADPH--hemoprotein reductase] + O2 = 6alpha-hydroxyestrone + oxidized [NADPH--hemoprotein reductase] + H2O + H(+). The catalysed reaction is estrone + reduced [NADPH--hemoprotein reductase] + O2 = 15alpha-hydroxyestrone + oxidized [NADPH--hemoprotein reductase] + H2O + H(+). The enzyme catalyses estrone + reduced [NADPH--hemoprotein reductase] + O2 = 16alpha-hydroxyestrone + oxidized [NADPH--hemoprotein reductase] + H2O + H(+). It catalyses the reaction 17beta-estradiol + reduced [NADPH--hemoprotein reductase] + O2 = 2-hydroxy-17beta-estradiol + oxidized [NADPH--hemoprotein reductase] + H2O + H(+). It carries out the reaction 17beta-estradiol + reduced [NADPH--hemoprotein reductase] + O2 = 4-hydroxy-17beta-estradiol + oxidized [NADPH--hemoprotein reductase] + H2O + H(+). The catalysed reaction is 17beta-estradiol + reduced [NADPH--hemoprotein reductase] + O2 = 6alpha-hydroxy-17beta-estradiol + oxidized [NADPH--hemoprotein reductase] + H2O + H(+). The enzyme catalyses 17beta-estradiol + reduced [NADPH--hemoprotein reductase] + O2 = 7alpha-hydroxy-17beta-estradiol + oxidized [NADPH--hemoprotein reductase] + H2O + H(+). It catalyses the reaction 17beta-estradiol + reduced [NADPH--hemoprotein reductase] + O2 = 15alpha-hydroxy-17beta-estradiol + oxidized [NADPH--hemoprotein reductase] + H2O + H(+). It carries out the reaction (5Z,8Z,11Z)-eicosatrienoate + reduced [NADPH--hemoprotein reductase] + O2 = 19-hydroxy-(5Z,8Z,11Z)-eicosatrienoate + oxidized [NADPH--hemoprotein reductase] + H2O + H(+). The catalysed reaction is (5Z,8Z,11Z,14Z)-eicosatetraenoate + reduced [NADPH--hemoprotein reductase] + O2 = 16-hydroxy-(5Z,8Z,11Z,14Z)-eicosatetraenoate + oxidized [NADPH--hemoprotein reductase] + H2O + H(+). The enzyme catalyses (5Z,8Z,11Z,14Z)-eicosatetraenoate + reduced [NADPH--hemoprotein reductase] + O2 = 17-hydroxy-(5Z,8Z,11Z,14Z)-eicosatetraenoate + oxidized [NADPH--hemoprotein reductase] + H2O + H(+). It catalyses the reaction (5Z,8Z,11Z,14Z)-eicosatetraenoate + reduced [NADPH--hemoprotein reductase] + O2 = 18-hydroxy-(5Z,8Z,11Z,14Z)-eicosatetraenoate + oxidized [NADPH--hemoprotein reductase] + H2O + H(+). It carries out the reaction (5Z,8Z,11Z,14Z)-eicosatetraenoate + reduced [NADPH--hemoprotein reductase] + O2 = 19-hydroxy-(5Z,8Z,11Z,14Z)-eicosatetraenoate + oxidized [NADPH--hemoprotein reductase] + H2O + H(+). The catalysed reaction is (5Z,8Z,11Z,14Z,17Z)-eicosapentaenoate + reduced [NADPH--hemoprotein reductase] + O2 = 19-hydroxy-(5Z,8Z,11Z,14Z,17Z)-eicosapentaenoate + oxidized [NADPH--hemoprotein reductase] + H2O + H(+). The enzyme catalyses (5Z,8Z,11Z,14Z)-eicosatetraenoate + reduced [NADPH--hemoprotein reductase] + O2 = (8R,9S)-epoxy-(5Z,11Z,14Z)-eicosatrienoate + oxidized [NADPH--hemoprotein reductase] + H2O + H(+). It catalyses the reaction (5Z,8Z,11Z,14Z)-eicosatetraenoate + reduced [NADPH--hemoprotein reductase] + O2 = (11R,12S)-epoxy-(5Z,8Z,14Z)-eicosatrienoate + oxidized [NADPH--hemoprotein reductase] + H2O + H(+). It carries out the reaction (5Z,8Z,11Z,14Z)-eicosatetraenoate + reduced [NADPH--hemoprotein reductase] + O2 = (14S,15R)-epoxy-(5Z,8Z,11Z)-eicosatrienoate + oxidized [NADPH--hemoprotein reductase] + H2O + H(+). The catalysed reaction is (5Z,8Z,11Z,14Z)-eicosatetraenoate + reduced [NADPH--hemoprotein reductase] + O2 = (14R,15S)-epoxy-(5Z,8Z,11Z)-eicosatrienoate + oxidized [NADPH--hemoprotein reductase] + H2O + H(+). The enzyme catalyses (5Z,8Z,11Z,14Z,17Z)-eicosapentaenoate + reduced [NADPH--hemoprotein reductase] + O2 = (17R,18S)-epoxy-(5Z,8Z,11Z,14Z)-eicosatetraenoate + oxidized [NADPH--hemoprotein reductase] + H2O + H(+). It catalyses the reaction (4Z,7Z,10Z,13Z,16Z,19Z)-docosahexaenoate + reduced [NADPH--hemoprotein reductase] + O2 = (19S,20R)-epoxy-(4Z,7Z,10Z,13Z,16Z)-docosapentaenoate + oxidized [NADPH--hemoprotein reductase] + H2O + H(+). It carries out the reaction (4Z,7Z,10Z,13Z,16Z,19Z)-docosahexaenoate + reduced [NADPH--hemoprotein reductase] + O2 = (19R,20S)-epoxy-(4Z,7Z,10Z,13Z,16Z)-docosapentaenoate + oxidized [NADPH--hemoprotein reductase] + H2O + H(+). The catalysed reaction is all-trans-retinol + reduced [NADPH--hemoprotein reductase] + O2 = all-trans-retinal + oxidized [NADPH--hemoprotein reductase] + 2 H2O + H(+). The enzyme catalyses all-trans-retinal + reduced [NADPH--hemoprotein reductase] + O2 = all-trans-retinoate + oxidized [NADPH--hemoprotein reductase] + H2O + 2 H(+). It catalyses the reaction (13S)-hydroperoxy-(9Z,11E)-octadecadienoate = 13-oxo-(9Z,11E)-octadecadienoate + H2O. It carries out the reaction (12S)-hydroperoxy-(5Z,8Z,10E,14Z)-eicosatetraenoate = 12-oxo-(5Z,8Z,10E,14Z)-eicosatetraenoate + H2O. The catalysed reaction is (15S)-hydroperoxy-(5Z,8Z,11Z,13E)-eicosatetraenoate = 15-oxo-(5Z,8Z,11Z,13E)-eicosatetraenoate + H2O. The enzyme catalyses (5S)-hydroperoxy-(6E,8Z,11Z,14Z)-eicosatetraenoate = 5-oxo-(6E,8Z,11Z,14Z)-eicosatetraenoate + H2O. Its pathway is steroid hormone biosynthesis. It participates in lipid metabolism; fatty acid metabolism. It functions in the pathway cofactor metabolism; retinol metabolism. Functionally, a cytochrome P450 monooxygenase involved in the metabolism of various endogenous substrates, including fatty acids, steroid hormones and vitamins. Mechanistically, uses molecular oxygen inserting one oxygen atom into a substrate, and reducing the second into a water molecule, with two electrons provided by NADPH via cytochrome P450 reductase (CPR; NADPH-ferrihemoprotein reductase). Catalyzes the hydroxylation of carbon-hydrogen bonds. Exhibits high catalytic activity for the formation of hydroxyestrogens from estrone (E1) and 17beta-estradiol (E2), namely 2-hydroxy E1 and E2, as well as D-ring hydroxylated E1 and E2 at the C15alpha and C16alpha positions. Displays different regioselectivities for polyunsaturated fatty acids (PUFA) hydroxylation. Catalyzes the epoxidation of double bonds of certain PUFA. Converts arachidonic acid toward epoxyeicosatrienoic acid (EET) regioisomers, 8,9-, 11,12-, and 14,15-EET, that function as lipid mediators in the vascular system. Displays an absolute stereoselectivity in the epoxidation of eicosapentaenoic acid (EPA) producing the 17(R),18(S) enantiomer. May play an important role in all-trans retinoic acid biosynthesis in extrahepatic tissues. Catalyzes two successive oxidative transformation of all-trans retinol to all-trans retinal and then to the active form all-trans retinoic acid. May also participate in eicosanoids metabolism by converting hydroperoxide species into oxo metabolites (lipoxygenase-like reaction, NADPH-independent). This is Cytochrome P450 1A1 (CYP1A1) from Macaca fascicularis (Crab-eating macaque).